Reading from the N-terminus, the 2226-residue chain is Rotatin (2226 aa).

Residues 295–345 (ARGTHHSQNPSPGSSSPRPSVVGRTGQRPRGDGQDWDAASSSGSSSHAHVN) form a disordered region. 2 stretches are compositionally biased toward low complexity: residues 304 to 318 (PSPG…VVGR) and 332 to 343 (AASSSGSSSHAH). Phosphoserine is present on S310. K811 is modified (N6-acetyllysine). The segment at 1534–1554 (SRTSQDRDPSSLSTSETTVAP) is disordered. The segment covering 1543–1554 (SSLSTSETTVAP) has biased composition (polar residues).

It belongs to the rotatin family. As to quaternary structure, interacts with PPP1R35; this interaction allows the mutual recruitment to the centriole.

Its subcellular location is the cytoplasm. The protein localises to the cytoskeleton. The protein resides in the cilium basal body. It localises to the microtubule organizing center. It is found in the centrosome. In terms of biological role, involved in the genetic cascade that governs left-right specification. Plays a role in the maintenance of a normal ciliary structure. Required for correct asymmetric expression of NODAL, LEFTY and PITX2. This chain is Rotatin, found in Homo sapiens (Human).